A 274-amino-acid polypeptide reads, in one-letter code: tRNA-cytidine(32) 2-sulfurtransferase (274 aa).

Residues 40–45 (SGGKDS) carry the PP-loop motif motif. [4Fe-4S] cluster is bound by residues Cys115, Cys118, and Cys206.

It belongs to the TtcA family. As to quaternary structure, homodimer. It depends on Mg(2+) as a cofactor. Requires [4Fe-4S] cluster as cofactor.

The protein resides in the cytoplasm. It catalyses the reaction cytidine(32) in tRNA + S-sulfanyl-L-cysteinyl-[cysteine desulfurase] + AH2 + ATP = 2-thiocytidine(32) in tRNA + L-cysteinyl-[cysteine desulfurase] + A + AMP + diphosphate + H(+). The protein operates within tRNA modification. In terms of biological role, catalyzes the ATP-dependent 2-thiolation of cytidine in position 32 of tRNA, to form 2-thiocytidine (s(2)C32). The sulfur atoms are provided by the cysteine/cysteine desulfurase (IscS) system. This chain is tRNA-cytidine(32) 2-sulfurtransferase, found in Pseudomonas entomophila (strain L48).